The following is a 234-amino-acid chain: Dienlactone hydrolase 2 (234 aa).

Residues Cys143, Asp167, and His199 contribute to the active site.

This sequence belongs to the dienelactone hydrolase family.

It participates in xenobiotic degradation. Its function is as follows. Dienlactone hydrolase; part of the Fusarium detoxification of benzoxazolinone cluster 2 (FDB2) involved in the degradation of benzoxazolinones produced by the host plant. Maize, wheat, and rye produce the 2 benzoxazinone phytoanticipins 2,4-dihy-droxy-7-methoxy-1,4-benzoxazin-3-one (DIMBOA) and 2,4-dihydroxy-1,4-benzoxazin-3-one (DIBOA) that, due to their inherent instability once released, spontaneously degrade to the more stable corresponding benzoxazolinones, 6-methoxy-2-benzoxazolinone (MBOA) and 2-benzoxazolinone (BOA), respectively. The first step in the detoxification of benzoxazolinones involves the hydrolysis of the cyclic ester bond of benzoxazolinones by the FDB1 cluster gamma-lactamase MBL1 to aminophenols. MBL1 is able to convert BOA into 2-aminophenol (2-AP), as well as MBOA into 5-methoxy-2-aminophenol (2-AMP). The FDB2 cluster N-malonyltransferase FDB2/NAT1 then metabolizes aminophenols via N-malonylation to non-toxic malonamic acids. FDB2/NAT1 converts 2-AP into N-(2-hydroxyphenyl) malonamic acid (HPMA) and 2-AMP into N-(2-hydroxy-4-methoxyphenyl) malonamic acid (HMPMA). The duplicated dienlactone hydrolases DLH1 and DLH2 may provide redundant function for hydrolyzing the lactone moiety in the BOA molecule. The roles of the amidases and other enzymes encoded by the 2 FDB clusters have not been identified so far. This Gibberella moniliformis (strain M3125 / FGSC 7600) (Maize ear and stalk rot fungus) protein is Dienlactone hydrolase 2.